Consider the following 132-residue polypeptide: Ribosome-binding factor A (132 aa).

The protein belongs to the RbfA family. Monomer. Binds 30S ribosomal subunits, but not 50S ribosomal subunits or 70S ribosomes.

It is found in the cytoplasm. Functionally, one of several proteins that assist in the late maturation steps of the functional core of the 30S ribosomal subunit. Associates with free 30S ribosomal subunits (but not with 30S subunits that are part of 70S ribosomes or polysomes). Required for efficient processing of 16S rRNA. May interact with the 5'-terminal helix region of 16S rRNA. The sequence is that of Ribosome-binding factor A from Prochlorococcus marinus subsp. pastoris (strain CCMP1986 / NIES-2087 / MED4).